The sequence spans 163 residues: MAKDSSFDIVSKVELPEVTNAINIALKEIQNRYDFKGSKSDIKLEKEVLVLTSDDEFKLEQVKDVLISKLVKRNVPIKNLDYGKVEAATGNTVRQRATLQQGIDKDNAKKINNIIKEMKLKVKTQVQDDQVRVTAKSRDDLQAVIAAVRSADLPIDVQFINYR.

The protein belongs to the YajQ family.

Functionally, nucleotide-binding protein. The protein is Nucleotide-binding protein BC_1159 of Bacillus cereus (strain ATCC 14579 / DSM 31 / CCUG 7414 / JCM 2152 / NBRC 15305 / NCIMB 9373 / NCTC 2599 / NRRL B-3711).